The sequence spans 165 residues: Nucleotide-binding protein Ccur92_01650 (165 aa).

This sequence belongs to the YajQ family.

Nucleotide-binding protein. This is Nucleotide-binding protein Ccur92_01650 from Campylobacter curvus (strain 525.92).